The primary structure comprises 1187 residues: DNA-directed RNA polymerase subunit beta (1187 aa).

The disordered stretch occupies residues 1150–1187 (KDEDDDPASSADDLGFNIGARPDAAAKEDQKAEEPEYQ). Residues 1173 to 1187 (AAAKEDQKAEEPEYQ) are compositionally biased toward basic and acidic residues.

This sequence belongs to the RNA polymerase beta chain family. The RNAP catalytic core consists of 2 alpha, 1 beta, 1 beta' and 1 omega subunit. When a sigma factor is associated with the core the holoenzyme is formed, which can initiate transcription.

It catalyses the reaction RNA(n) + a ribonucleoside 5'-triphosphate = RNA(n+1) + diphosphate. DNA-dependent RNA polymerase catalyzes the transcription of DNA into RNA using the four ribonucleoside triphosphates as substrates. In Bifidobacterium longum subsp. infantis (strain ATCC 15697 / DSM 20088 / JCM 1222 / NCTC 11817 / S12), this protein is DNA-directed RNA polymerase subunit beta.